Here is a 59-residue protein sequence, read N- to C-terminus: UPF0181 protein YoaH (59 aa).

It belongs to the UPF0181 family.

The chain is UPF0181 protein YoaH from Shigella flexneri.